The sequence spans 259 residues: Thiazole synthase (259 aa).

Lysine 98 functions as the Schiff-base intermediate with DXP in the catalytic mechanism. 1-deoxy-D-xylulose 5-phosphate contacts are provided by residues glycine 159, 185–186 (AG), and 207–208 (NS).

This sequence belongs to the ThiG family. In terms of assembly, homotetramer. Forms heterodimers with either ThiH or ThiS.

It localises to the cytoplasm. The enzyme catalyses [ThiS sulfur-carrier protein]-C-terminal-Gly-aminoethanethioate + 2-iminoacetate + 1-deoxy-D-xylulose 5-phosphate = [ThiS sulfur-carrier protein]-C-terminal Gly-Gly + 2-[(2R,5Z)-2-carboxy-4-methylthiazol-5(2H)-ylidene]ethyl phosphate + 2 H2O + H(+). The protein operates within cofactor biosynthesis; thiamine diphosphate biosynthesis. Its function is as follows. Catalyzes the rearrangement of 1-deoxy-D-xylulose 5-phosphate (DXP) to produce the thiazole phosphate moiety of thiamine. Sulfur is provided by the thiocarboxylate moiety of the carrier protein ThiS. In vitro, sulfur can be provided by H(2)S. In Chlorobium phaeobacteroides (strain DSM 266 / SMG 266 / 2430), this protein is Thiazole synthase.